The primary structure comprises 139 residues: Large ribosomal subunit protein uL16 (139 aa).

The protein belongs to the universal ribosomal protein uL16 family. Part of the 50S ribosomal subunit.

Binds 23S rRNA and is also seen to make contacts with the A and possibly P site tRNAs. This chain is Large ribosomal subunit protein uL16, found in Microcystis aeruginosa (strain NIES-843 / IAM M-2473).